The following is a 630-amino-acid chain: Polypeptide N-acetylgalactosaminyltransferase 5 (630 aa).

Topologically, residues 1-20 (MTFSTFTRKMRGRMRSNTCR) are cytoplasmic. A helical; Signal-anchor for type II membrane protein membrane pass occupies residues 21–38 (IVLLTSLVWVIFDFVLIA). Over 39-630 (RYSDCIGKDG…MESKFKWQAH (592 aa)) the chain is Lumenal. Asn166 is a glycosylation site (N-linked (GlcNAc...) asparagine). 5 disulfide bridges follow: Cys177/Cys410, Cys401/Cys479, Cys513/Cys530, Cys553/Cys568, and Cys594/Cys611. Residues 186 to 296 (LPTTSIVIVF…EGWLEPLLAR (111 aa)) are catalytic subdomain A. Substrate-binding residues include Asp227 and Arg257. Mn(2+)-binding residues include Asp280 and His282. The interval 356 to 418 (PLRTPTMAGG…PCSHVGHVFR (63 aa)) is catalytic subdomain B. Trp387 is a binding site for substrate. Residue His415 coordinates Mn(2+). Arg418 and Tyr423 together coordinate substrate. Residues 500-622 (YYLGEIRNAE…YGKGQQWLME (123 aa)) enclose the Ricin B-type lectin domain.

This sequence belongs to the glycosyltransferase 2 family. GalNAc-T subfamily. Mn(2+) serves as cofactor. Expressed during oogenesis, in the somatically derived follicle cells that surround the developing oocyte, which are involved in the maturation of the oocyte and construction of the egg shell, as well as playing a role in subsequent embryonic pattern formation. During embryonic stages 9-11, expressed in the primordium of the foregut, midgut and hindgut. Expressed in salivary glands from embryonic stage 12 onwards. During embryonic stages 12-13, expressed in the posterior midgut and hindgut. During embryonic stages 14-17, expressed in the hindgut and the posterior spiracles. Expression is also detected in the epidermis and antennomaxillary complex at embryonic stages 16-17. In third instar larvae, ubiquitously expressed in wing, eye-antennal, leg and haltere imaginal disks.

It localises to the golgi apparatus membrane. It carries out the reaction L-seryl-[protein] + UDP-N-acetyl-alpha-D-galactosamine = a 3-O-[N-acetyl-alpha-D-galactosaminyl]-L-seryl-[protein] + UDP + H(+). It catalyses the reaction L-threonyl-[protein] + UDP-N-acetyl-alpha-D-galactosamine = a 3-O-[N-acetyl-alpha-D-galactosaminyl]-L-threonyl-[protein] + UDP + H(+). Its pathway is protein modification; protein glycosylation. Functionally, catalyzes the initial reaction in O-linked oligosaccharide biosynthesis, the transfer of an N-acetyl-D-galactosamine residue to a serine or threonine residue on the protein receptor. It can both act as a peptide transferase that transfers GalNAc onto unmodified peptide substrates, and as a glycopeptide transferase that requires the prior addition of a GalNAc on a peptide before adding additional GalNAc moieties. Prefers EA2 as substrate. In the larval midgut, required for O-glycosylation of apical and luminal proteins within copper cells enabling proper gut acidification. This is Polypeptide N-acetylgalactosaminyltransferase 5 from Drosophila melanogaster (Fruit fly).